We begin with the raw amino-acid sequence, 216 residues long: Adenylate kinase (216 aa).

10 to 15 lines the ATP pocket; the sequence is GAGKGT. Residues 30 to 59 form an NMP region; that stretch reads STGDMFRAAMKAETEMGLQAKSFIDKGALV. Residues Thr-31, Arg-36, 57-59, 85-88, and Gln-92 contribute to the AMP site; these read ALV and GFPR. The interval 126–163 is LID; that stretch reads GRRICKECGATYHLEFNPPAKADVCDKCGGELYQRSDD. Residue Arg-127 coordinates ATP. Residues Cys-130 and Cys-133 each coordinate Zn(2+). 136 to 137 contributes to the ATP binding site; sequence TY. Residues Cys-150 and Cys-153 each contribute to the Zn(2+) site. Positions 160 and 171 each coordinate AMP. Gln-199 contacts ATP.

The protein belongs to the adenylate kinase family. As to quaternary structure, monomer.

It is found in the cytoplasm. The catalysed reaction is AMP + ATP = 2 ADP. It participates in purine metabolism; AMP biosynthesis via salvage pathway; AMP from ADP: step 1/1. Catalyzes the reversible transfer of the terminal phosphate group between ATP and AMP. Plays an important role in cellular energy homeostasis and in adenine nucleotide metabolism. In Bacillus cereus (strain B4264), this protein is Adenylate kinase.